Consider the following 187-residue polypeptide: Large ribosomal subunit protein uL5 (187 aa).

Belongs to the universal ribosomal protein uL5 family. As to quaternary structure, part of the 50S ribosomal subunit; part of the 5S rRNA/L5/L18/L25 subcomplex. Contacts the 5S rRNA and the P site tRNA. Forms a bridge to the 30S subunit in the 70S ribosome.

Functionally, this is one of the proteins that bind and probably mediate the attachment of the 5S RNA into the large ribosomal subunit, where it forms part of the central protuberance. In the 70S ribosome it contacts protein S13 of the 30S subunit (bridge B1b), connecting the 2 subunits; this bridge is implicated in subunit movement. Contacts the P site tRNA; the 5S rRNA and some of its associated proteins might help stabilize positioning of ribosome-bound tRNAs. The chain is Large ribosomal subunit protein uL5 from Gluconobacter oxydans (strain 621H) (Gluconobacter suboxydans).